Here is a 236-residue protein sequence, read N- to C-terminus: Uridylate kinase (236 aa).

Residue 12-15 participates in ATP binding; that stretch reads KLSG. The interval 20–25 is involved in allosteric activation by GTP; that stretch reads GEKGFG. A UMP-binding site is contributed by glycine 54. ATP contacts are provided by glycine 55 and arginine 59. UMP is bound by residues aspartate 72 and 133-140; that span reads TGNPYFST. Residues asparagine 161, tyrosine 166, and aspartate 169 each coordinate ATP.

Belongs to the UMP kinase family. Homohexamer.

Its subcellular location is the cytoplasm. It carries out the reaction UMP + ATP = UDP + ADP. It participates in pyrimidine metabolism; CTP biosynthesis via de novo pathway; UDP from UMP (UMPK route): step 1/1. Its activity is regulated as follows. Allosterically activated by GTP. Inhibited by UTP. Functionally, catalyzes the reversible phosphorylation of UMP to UDP. The protein is Uridylate kinase of Alkaliphilus metalliredigens (strain QYMF).